A 201-amino-acid polypeptide reads, in one-letter code: Coiled-coil domain-containing protein 195 (201 aa).

A coiled-coil region spans residues 4–38 (DIQLMRLIQEMRAEIHKLEKENQALRMKLTASSQR). Disordered stretches follow at residues 28–72 (LRMK…DAAP) and 179–201 (SKNS…IIAE). Low complexity predominate over residues 179–188 (SKNSSSLKHS). The span at 189–201 (PNQATNQLSIIAE) shows a compositional bias: polar residues.

The polypeptide is Coiled-coil domain-containing protein 195 (Homo sapiens (Human)).